The sequence spans 317 residues: Transaldolase (317 aa).

Lys132 acts as the Schiff-base intermediate with substrate in catalysis.

Belongs to the transaldolase family. Type 1 subfamily. Homodimer.

Its subcellular location is the cytoplasm. It catalyses the reaction D-sedoheptulose 7-phosphate + D-glyceraldehyde 3-phosphate = D-erythrose 4-phosphate + beta-D-fructose 6-phosphate. It functions in the pathway carbohydrate degradation; pentose phosphate pathway; D-glyceraldehyde 3-phosphate and beta-D-fructose 6-phosphate from D-ribose 5-phosphate and D-xylulose 5-phosphate (non-oxidative stage): step 2/3. Functionally, transaldolase is important for the balance of metabolites in the pentose-phosphate pathway. The chain is Transaldolase from Shewanella amazonensis (strain ATCC BAA-1098 / SB2B).